Consider the following 724-residue polypeptide: MALSSWSPELGLGSEKALPVAAVSTGPSLELCTFPSTLGSSVATDALEQLLVVEQSLQSDYFKCNEEAKNFLKDVAIAVKKLEEMRKSTIDLLEIESMELSRLYFVLETLPTSVSRELEECVRDARRVNLVEMSELHTKITRINDEIEFLKKKILHLQTDNTALGERQEELAKHYGKIVLSVNHAMKEKATTTIYINETYTKINLEKKELELQKTYIQEIEEQIERERAEYLKKKEKLNQEIEEYKKLCELKRKETYAKKKELDKLRLTMTKMRETVTTSTVVLSDHNLELARLQESIREWEHKIEDMKKSCKILEDKMLFFKNNREKLDDSSNFEKSELLLKIKQMTEKLHNCRLENKALREKLHTVSRQYKIVLNEEDKVFMQKRKIYSENQKQLAFIAQKENFLSKRKVDIKNMEEGLITLGELHRATKEVYRKQIKILNENMERETQRCIITQWKIACLRKKHARWVKKIKDEIKELIDKIQEAENRRSELIEETSIREHDINEFLAKIEQLTLELKQEEDAFVIKERKLIQELSKFEQRFAEEAQISKEKEVELDKCLPQLQVAEEEFTDKNRKFQNLIETVTAQKNEQNLLNNNISQFTRDFIRYINNTKKVKQELKQLREHESYKTKAHFEILKSLENEIYLHDLKTDALILENKRLKEYIAYLKDNIEQYERGGEDLVRSSSDLSCQLTDLQTQYSDLWAEFWTTLKKRRKRVLLK.

Coiled-coil stretches lie at residues 131 to 164, 203 to 256, 282 to 373, 426 to 534, and 565 to 627; these read VEMS…NTAL, INLE…RKET, VVLS…RQYK, ELHR…ERKL, and QLQV…QLRE.

The sequence is that of Coiled-coil domain-containing protein 175 (CCDC175) from Bos taurus (Bovine).